The sequence spans 175 residues: Transcription factor E (175 aa).

The HTH TFE/IIEalpha-type domain occupies 3–88 (ENPLIQQVLF…TWKPSLEKVP (86 aa)).

This sequence belongs to the TFE family. In terms of assembly, monomer. Interaction with RNA polymerase subunits RpoF and RpoE is necessary for Tfe stimulatory transcription activity. Able to interact with Tbp and RNA polymerase in the absence of DNA promoter. Interacts both with the preinitiation and elongation complexes.

Functionally, transcription factor that plays a role in the activation of archaeal genes transcribed by RNA polymerase. Facilitates transcription initiation by enhancing TATA-box recognition by TATA-box-binding protein (Tbp), and transcription factor B (Tfb) and RNA polymerase recruitment. Not absolutely required for transcription in vitro, but particularly important in cases where Tbp or Tfb function is not optimal. It dynamically alters the nucleic acid-binding properties of RNA polymerases by stabilizing the initiation complex and destabilizing elongation complexes. Seems to translocate with the RNA polymerase following initiation and acts by binding to the non template strand of the transcription bubble in elongation complexes. The sequence is that of Transcription factor E from Methanococcus maripaludis (strain C7 / ATCC BAA-1331).